A 504-amino-acid chain; its full sequence is 26S proteasome non-ATPase regulatory subunit 5 (504 aa).

Alanine 2 bears the N-acetylalanine mark.

It belongs to the proteasome subunit S5B/HSM3 family. In terms of assembly, interacts with PSMC1, PSMC2, PSMD1 and PSMD6. Part of transient complex containing PSMD5, PSMC2, PSMC1 and PSMD2 formed during the assembly of the 26S proteasome.

Its function is as follows. Acts as a chaperone during the assembly of the 26S proteasome, specifically of the base subcomplex of the PA700/19S regulatory complex (RC). In the initial step of the base subcomplex assembly is part of an intermediate PSMD5:PSMC2:PSMC1:PSMD2 module which probably assembles with a PSMD10:PSMC4:PSMC5:PAAF1 module followed by dissociation of PSMD5. The polypeptide is 26S proteasome non-ATPase regulatory subunit 5 (PSMD5) (Homo sapiens (Human)).